The following is a 475-amino-acid chain: 3-isopropylmalate dehydratase large subunit (475 aa).

The [4Fe-4S] cluster site is built by Cys352, Cys413, and Cys416.

The protein belongs to the aconitase/IPM isomerase family. LeuC type 1 subfamily. In terms of assembly, heterodimer of LeuC and LeuD. [4Fe-4S] cluster is required as a cofactor.

It catalyses the reaction (2R,3S)-3-isopropylmalate = (2S)-2-isopropylmalate. The protein operates within amino-acid biosynthesis; L-leucine biosynthesis; L-leucine from 3-methyl-2-oxobutanoate: step 2/4. In terms of biological role, catalyzes the isomerization between 2-isopropylmalate and 3-isopropylmalate, via the formation of 2-isopropylmaleate. The protein is 3-isopropylmalate dehydratase large subunit of Pseudomonas syringae pv. tomato (strain ATCC BAA-871 / DC3000).